A 281-amino-acid chain; its full sequence is Pantothenate synthetase (281 aa).

An ATP-binding site is contributed by 30 to 37 (MGNLHQGH). H37 (proton donor) is an active-site residue. Q61 contacts (R)-pantoate. Position 61 (Q61) interacts with beta-alanine. Residue 149 to 152 (GNKD) participates in ATP binding. (R)-pantoate is bound at residue Q155. ATP-binding positions include I178 and 186 to 189 (MSSR).

The protein belongs to the pantothenate synthetase family. As to quaternary structure, homodimer.

The protein localises to the cytoplasm. It carries out the reaction (R)-pantoate + beta-alanine + ATP = (R)-pantothenate + AMP + diphosphate + H(+). The protein operates within cofactor biosynthesis; (R)-pantothenate biosynthesis; (R)-pantothenate from (R)-pantoate and beta-alanine: step 1/1. Functionally, catalyzes the condensation of pantoate with beta-alanine in an ATP-dependent reaction via a pantoyl-adenylate intermediate. This is Pantothenate synthetase from Shewanella baltica (strain OS195).